A 220-amino-acid polypeptide reads, in one-letter code: Small ribosomal subunit protein uS3 (220 aa).

The region spanning 43 to 111 is the KH type-2 domain; the sequence is IRSYLTKTLD…QVQLNILEVK (69 aa).

The protein belongs to the universal ribosomal protein uS3 family. In terms of assembly, part of the 30S ribosomal subunit. Forms a tight complex with proteins S10 and S14.

Functionally, binds the lower part of the 30S subunit head. Binds mRNA in the 70S ribosome, positioning it for translation. The polypeptide is Small ribosomal subunit protein uS3 (Tropheryma whipplei (strain TW08/27) (Whipple's bacillus)).